The primary structure comprises 272 residues: Catechol O-methyltransferase (272 aa).

The Cytoplasmic portion of the chain corresponds to 1 to 6; sequence MLEAPP. Residues 7-27 form a helical; Signal-anchor for type II membrane protein membrane-spanning segment; that stretch reads LLLVAGGVGLALLALRWLATT. Topologically, residues 28–272 are extracellular; the sequence is DLQFFGRAFI…YKGLSGPARP (245 aa). S-adenosyl-L-methionine is bound by residues V93, E115, S123, E141, 168–171, S170, and D192; that span reads GASQ. D192 serves as a coordination point for Mg(2+). K195 lines the substrate pocket. Mg(2+) is bound by residues D220 and N221. The substrate site is built by N221 and E250. Position 267 is a phosphoserine (S267).

Belongs to the class I-like SAM-binding methyltransferase superfamily. Cation-dependent O-methyltransferase family. Requires Mg(2+) as cofactor.

It localises to the cytoplasm. It is found in the cell membrane. It catalyses the reaction a catechol + S-adenosyl-L-methionine = a guaiacol + S-adenosyl-L-homocysteine + H(+). It carries out the reaction 2-hydroxyestrone + S-adenosyl-L-methionine = 2-hydroxy-3-methoxy-estrone + S-adenosyl-L-homocysteine + H(+). The catalysed reaction is 4-hydroxyestrone + S-adenosyl-L-methionine = 4-methoxyestrone + S-adenosyl-L-homocysteine + H(+). The enzyme catalyses 2-hydroxyestrone + S-adenosyl-L-methionine = 2-methoxyestrone + S-adenosyl-L-homocysteine + H(+). It catalyses the reaction 4-hydroxy-17beta-estradiol + S-adenosyl-L-methionine = 4-methoxy-17beta-estradiol + S-adenosyl-L-homocysteine + H(+). It carries out the reaction 2-hydroxy-17beta-estradiol + S-adenosyl-L-methionine = 2-hydroxy-3-methoxy-17beta-estradiol + S-adenosyl-L-homocysteine + H(+). The catalysed reaction is 2-hydroxy-17beta-estradiol + S-adenosyl-L-methionine = 2-methoxy-17beta-estradiol + S-adenosyl-L-homocysteine + H(+). Catalyzes the O-methylation, and thereby the inactivation, of catecholamine neurotransmitters and catechol hormones. Also shortens the biological half-lives of certain neuroactive drugs, like L-DOPA, alpha-methyl DOPA and isoproterenol. The chain is Catechol O-methyltransferase (COMT) from Bos taurus (Bovine).